Here is a 282-residue protein sequence, read N- to C-terminus: Pantothenate synthetase (282 aa).

Residue 30-37 coordinates ATP; sequence MGYLHEGH. The active-site Proton donor is His-37. Gln-61 contacts (R)-pantoate. Gln-61 contributes to the beta-alanine binding site. 147 to 150 lines the ATP pocket; it reads GMKD. Gln-153 contacts (R)-pantoate. Residues Val-176 and 184-187 each bind ATP; that span reads KSSR.

The protein belongs to the pantothenate synthetase family. In terms of assembly, homodimer.

It is found in the cytoplasm. The catalysed reaction is (R)-pantoate + beta-alanine + ATP = (R)-pantothenate + AMP + diphosphate + H(+). It participates in cofactor biosynthesis; (R)-pantothenate biosynthesis; (R)-pantothenate from (R)-pantoate and beta-alanine: step 1/1. Its function is as follows. Catalyzes the condensation of pantoate with beta-alanine in an ATP-dependent reaction via a pantoyl-adenylate intermediate. This Bacillus mycoides (strain KBAB4) (Bacillus weihenstephanensis) protein is Pantothenate synthetase.